Consider the following 2413-residue polypeptide: Pre-mRNA-splicing factor 8 (2413 aa).

Pro residues-rich tracts occupy residues 1–10 (MSGLPPPPPG) and 19–28 (LPPPPPPPPG). The segment at 1–60 (MSGLPPPPPGFEEDSDLALPPPPPPPPGYEIEELDNPMVPSSVNEDTFLPPPPPPPSNFE) is disordered. The SNU114/CWC21 interacting domain (SCwid) stretch occupies residues 253–543 (QHIENIEPLD…LHPTLPTNHN (291 aa)). A reverse transcriptase homology domain region spans residues 885-1375 (VMVEWLESRS…RIQNRVKLGL (491 aa)). The linker stretch occupies residues 1376–1649 (NSKMPTRFPP…TLKISLIQIF (274 aa)). Residues 1585–1598 (MQFKKLTHAQRTGL) form an important for branch point selection region. The restriction endonuclease homology domain stretch occupies residues 1653–1824 (LWQKIHESIV…LRERIRKGLQ (172 aa)). Residues 1839–2092 (NYAELFNNDI…ILGQNIKAPS (254 aa)) are RNase H homology domain. The MPN domain maps to 2182-2311 (VYVLPKNLLK…LSAYNLTDEG (130 aa)).

In terms of assembly, component of the U4/U6-U5 tri-snRNP complex composed of the U4, U6 and U5 snRNAs and at least PRP3, PRP4, PRP6, PRP8, PRP18, PRP31, PRP38, SNU13, SNU23, SNU66, SNU114, SPP381, SMB1, SMD1, SMD2, SMD3, SMX2, SMX3, LSM2, LSM3, LSM4, LSM5, LSM6, LSM7, LSM8, BRR2 and DIB1. Belongs to the CWC complex (or CEF1-associated complex), a spliceosome sub-complex reminiscent of a late-stage spliceosome composed of the U2, U5 and U6 snRNAs and at least BUD13, BUD31, BRR2, CDC40, CEF1, CLF1, CUS1, CWC2, CWC15, CWC21, CWC22, CWC23, CWC24, CWC25, CWC27, ECM2, HSH155, IST3, ISY1, LEA1, MSL1, NTC20, PRP8, PRP9, PRP11, PRP19, PRP21, PRP22, PRP45, PRP46, SLU7, SMB1, SMD1, SMD2, SMD3, SMX2, SMX3, SNT309, SNU114, SPP2, SYF1, SYF2, RSE1 and YJU2. Interacts with PRP40 and SNP1. Interacts (via SCwid domain) with CWC21. Interacts (via SCwid domain) with SNU114 (via N-terminus). Interacts (via RNase H homology domain and MPN domain) with BRR2; this modulates BRR2 ATPase and helicase activity. Interacts (via RNase H homology domain) with AAR2. AAR2 and BRR2 compete for PRP8 binding, and during U5 snRNP maturation BRR2 displaces the initially bound AAR2. Is associated with snRNP U5, together with SNU114 and BRR2.

It is found in the nucleus. Functions as a scaffold that mediates the ordered assembly of spliceosomal proteins and snRNAs. Required for association of BRR2 with the spliceosomal U5 snRNP, and the subsequent assembly of the U4/U6-U5 tri-snRNP complex. Functions as a scaffold that positions spliceosomal U2, U5 and U6 snRNAs at splice sites on pre-mRNA substrates, so that splicing can occur. Interacts with both the 5' and the 3' splice site, as well as the branch region. Has a role in branch site-3' splice site selection. Associates with the branch site-3' splice 3'-exon region. Also has a role in cell cycle. This chain is Pre-mRNA-splicing factor 8 (PRP8), found in Saccharomyces cerevisiae (strain ATCC 204508 / S288c) (Baker's yeast).